Here is a 368-residue protein sequence, read N- to C-terminus: MEITNVMEYEKIAKEKLPKMVYDYYASGAEDQWTLQENRNAFSRILFRPRILIDVSKIDVSTTVLGFNISMPIMIAPTAMQKMAHPDGELATARATSAAGTIMTLSSWATCSVEEVASTGPGIRFFQLYVYKDRNVVIQLVKRAEEAGFKAIALTVDTPRLGRRESDIKNRFALPRGLTLKNFEGLDLGKIDKTNDSGLASYVAGQVDQSLSWKDIKWLQSITSLPILVKGVITAEDARIAVEYGAAGIIVSNHGARQLDYVPATIVALEEVVKAVEGRIPVFLDGGVRRGTDVFKALALGASGVFVGRPSLFSLAADGEAGVRKMLQMLRDEFELTMALSGCRSLREISRTHIKTDWDTPHYLSAKL.

Met1 carries the post-translational modification N-acetylmethionine. An FMN hydroxy acid dehydrogenase domain is found at 1–359 (MEITNVMEYE…SRTHIKTDWD (359 aa)). Tyr24 is a binding site for glyoxylate. Residues 77-79 (PTA), Ser106, 127-129 (QLY), and Thr155 contribute to the FMN site. Tyr129 is a binding site for glyoxylate. Residue Arg164 coordinates glyoxylate. Residues Lys230 and Ser252 each coordinate FMN. Positions 254 and 257 each coordinate glyoxylate. The active-site Proton acceptor is the His254. Residues 285 to 289 (DGGVR) and 308 to 309 (GR) each bind FMN.

The protein belongs to the FMN-dependent alpha-hydroxy acid dehydrogenase family. In terms of assembly, homotetramer. FMN serves as cofactor.

The protein resides in the peroxisome. The catalysed reaction is glycolate + O2 = glyoxylate + H2O2. It functions in the pathway photosynthesis; photorespiration; glycine from 2-phosphoglycolate: step 2/3. Functionally, catalyzes the oxidation of glycolate to glyoxylate, with a reduction of O2 to H2O2. Is a key enzyme in photorespiration in green plants. The polypeptide is Glycolate oxidase 3 (GLO5) (Arabidopsis thaliana (Mouse-ear cress)).